We begin with the raw amino-acid sequence, 425 residues long: TRAF family member-associated NF-kappa-B activator (425 aa).

The residue at position 1 (M1) is an N-acetylmethionine. Residues M1 to Q31 form a necessary for interaction with ZC3H12A region. The stretch at D22 to L62 forms a coiled coil. Residues D70–E191 form a necessary for interaction with TRAF6 region. S126 and S129 each carry phosphoserine. An interaction with TBK1 and IKBKE region spans residues H133–A172. A TRAF family member interaction region spans residues A172–E191. 2 positions are modified to phosphoserine: S178 and S208. At T213 the chain carries Phosphothreonine. 5 positions are modified to phosphoserine: S225, S228, S341, S354, and S357. Residues P393 to H420 form a UBZ1-type zinc finger. Residues C396, C399, H416, and H420 each coordinate Zn(2+).

In terms of assembly, homodimer. Found in a deubiquitination complex with TANK, USP10 and ZC3H12A; this complex inhibits genotoxic stress- or interleukin-1-beta-mediated NF-kappaB activation by promoting IKBKG or TRAF6 deubiquitination. Interacts with IKBKG; this interaction increases in response to DNA damage. Interacts with TRAF6; this interaction increases in response to DNA damage and recruits USP10 to the ubiquitinated TRAF6. Interacts with USP10; this interaction increases in response to DNA damage. Interacts with ZC3H12A; this interaction increases in response to DNA damage. Interacts with TBK1. Interacts with IKBKE. Also interacts with TRAF1, TRAF2, and TRAF3 by binding to their TRAF-C domains; the interaction with TRAF2 is disrupted by the phosphorylation of TANK by IKBKE. Interacts more strongly with TRAF1 and TRAF2 than TRAF3. Interacts with IKBKG; the interaction is enhanced by IKBKE and TBK1. Part of a ternary complex consisting of TANK, IKBKB and IKBKG. (Microbial infection) Interacts with vaccinia virus protein C6. As to quaternary structure, (Microbial infection) Interacts with Seneca Valley virus protease 3C; this interaction allows the cleavage of TANK and subsequent suppression of host innate immunity. In terms of processing, phosphorylated by IKBKE. (Microbial infection) Cleaved by encephalomyocarditis virus (EMCV) protease 3C. This cleavage allows the virus to disrupt the TANK-TBK1-IKKepsilon-IRF3 complex, thereby inhibiting the induction of the IFN-beta signal pathway. Post-translationally, (Microbial infection) Cleaved by Seneca Valley virus protease 3C allowing the virus to suppress interferon type-I through both RIG-I and Toll-like receptor-dependent pathways. As to expression, ubiquitous.

The protein localises to the cytoplasm. Its function is as follows. Adapter protein involved in I-kappa-B-kinase (IKK) regulation which constitutively binds TBK1 and IKBKE playing a role in antiviral innate immunity. Acts as a regulator of TRAF function by maintaining them in a latent state. Blocks TRAF2 binding to LMP1 and inhibits LMP1-mediated NF-kappa-B activation. Negatively regulates NF-kappaB signaling and cell survival upon DNA damage. Plays a role as an adapter to assemble ZC3H12A, USP10 in a deubiquitination complex which plays a negative feedback response to attenuate NF-kappaB activation through the deubiquitination of IKBKG or TRAF6 in response to interleukin-1-beta (IL1B) stimulation or upon DNA damage. Promotes UBP10-induced deubiquitination of TRAF6 in response to DNA damage. May control negatively TRAF2-mediated NF-kappa-B activation signaled by CD40, TNFR1 and TNFR2. The sequence is that of TRAF family member-associated NF-kappa-B activator (TANK) from Homo sapiens (Human).